We begin with the raw amino-acid sequence, 212 residues long: Transmembrane emp24 domain-containing protein p24delta4 (212 aa).

The first 25 residues, 1 to 25, serve as a signal peptide directing secretion; sequence MKKKMIPTTILLSALIFSLSPICEA. The Lumenal portion of the chain corresponds to 26 to 179; sequence VWLTVPHTGS…RIVSEKTNSR (154 aa). The 113-residue stretch at 35–147 folds into the GOLD domain; the sequence is SKCVSEEIQS…IEGVELEFKK (113 aa). An N-linked (GlcNAc...) asparagine glycan is attached at Asn-82. The stretch at 133–155 forms a coiled coil; sequence ARKEKIEGVELEFKKLEGAVEAI. An omega-N-methylated arginine mark is found at Arg-165 and Arg-170. A helical transmembrane segment spans residues 180–200; it reads VAWYSIMSLGICIVVSGLQIL. Over 201–212 the chain is Cytoplasmic; the sequence is YLKQYFEKKKLI. The COPII vesicle coat-binding signature appears at 205–206; it reads YF. Positions 205 to 212 match the COPI vesicle coat-binding motif; sequence YFEKKKLI.

Belongs to the EMP24/GP25L family. In terms of assembly, probably oligomerizes with other members of the EMP24/GP25L family. Associates with the COPI vesicle coat (coatomer). Associates with the COPII vesicle coat (coatomer).

Its subcellular location is the endoplasmic reticulum membrane. It is found in the golgi apparatus membrane. Involved in vesicular protein trafficking. Mainly functions in the early secretory pathway. Required for trafficking GLL23, a component of the PYK10 complex. May act as a receptor facilitating its packing into COPII carriers and export from the endoplasmic reticulum. This is Transmembrane emp24 domain-containing protein p24delta4 (CYB) from Arabidopsis thaliana (Mouse-ear cress).